We begin with the raw amino-acid sequence, 313 residues long: N-acetyl-gamma-glutamyl-phosphate reductase (313 aa).

The active site involves C117.

This sequence belongs to the NAGSA dehydrogenase family. Type 2 subfamily.

The protein localises to the cytoplasm. The catalysed reaction is N-acetyl-L-glutamate 5-semialdehyde + phosphate + NADP(+) = N-acetyl-L-glutamyl 5-phosphate + NADPH + H(+). Its pathway is amino-acid biosynthesis; L-arginine biosynthesis; N(2)-acetyl-L-ornithine from L-glutamate: step 3/4. Catalyzes the NADPH-dependent reduction of N-acetyl-5-glutamyl phosphate to yield N-acetyl-L-glutamate 5-semialdehyde. This chain is N-acetyl-gamma-glutamyl-phosphate reductase, found in Burkholderia cenocepacia (strain ATCC BAA-245 / DSM 16553 / LMG 16656 / NCTC 13227 / J2315 / CF5610) (Burkholderia cepacia (strain J2315)).